Here is a 324-residue protein sequence, read N- to C-terminus: MKNFNLTHRIVMAPMARMRSYGNIPQPHVALYYCQRTTPGGLLISEATGVSETAMAYQNMPGIWRKEQIEAWKPIVDAVHSHGGIFFCQLWHAGRVSHQDCQPNGESPVSSTDKPFADDPSNEFTPPRRLRTDEIPTIINDFRLAARNATEAGFDGVEIHGAHGYLIDQFMKDSVNDRTDSYGGSLENRCRFALQVIEAVSKEIGPDRVGIRLSPFADYMESGDTDPKRLGLYMAKSLNRFEILYCHMIEPRMKTVSEIFECRESLTPMRNAFNGTFIVAGGYTREDGNKAVAEGRTDLVAYGRLFLANPDLPKRFELNAPLNK.

Residue M1 is modified to N-acetylmethionine. FMN is bound by residues 14–16, A47, and Q89; that span reads PMA. Polar residues predominate over residues 99 to 113; sequence QDCQPNGESPVSSTD. The tract at residues 99–128 is disordered; sequence QDCQPNGESPVSSTDKPFADDPSNEFTPPR. 160 to 163 serves as a coordination point for substrate; it reads HGAH. The Proton donor role is filled by Y165. Residue R212 participates in FMN binding. R252 contacts substrate. Residues G282 and 303-304 each bind FMN; that span reads GR.

Belongs to the NADH:flavin oxidoreductase/NADH oxidase family. It depends on FMN as a cofactor.

Functionally, putative oxophytodienoate reductase that may be involved in the biosynthesis or metabolism of oxylipin signaling molecules. This Arabidopsis thaliana (Mouse-ear cress) protein is Putative 12-oxophytodienoate reductase-like protein 1.